Here is a 452-residue protein sequence, read N- to C-terminus: Phosphoglucosamine mutase (452 aa).

Ser105 acts as the Phosphoserine intermediate in catalysis. Ser105, Asp244, Asp246, and Asp248 together coordinate Mg(2+). At Ser105 the chain carries Phosphoserine.

The protein belongs to the phosphohexose mutase family. Requires Mg(2+) as cofactor. Post-translationally, activated by phosphorylation.

The enzyme catalyses alpha-D-glucosamine 1-phosphate = D-glucosamine 6-phosphate. In terms of biological role, catalyzes the conversion of glucosamine-6-phosphate to glucosamine-1-phosphate. The chain is Phosphoglucosamine mutase from Blochmanniella floridana.